The following is a 509-amino-acid chain: Zinc finger protein CKR1 (509 aa).

In terms of domain architecture, KRAB spans 1–61 (MEPYVLLDPR…GSEEPQTHPP (61 aa)). Composition is skewed to basic and acidic residues over residues 41 to 50 (EDAVGLKEDA) and 98 to 112 (PKRDGVKPSRVRDRP). Residues 41 to 114 (EDAVGLKEDA…PSRVRDRPFG (74 aa)) are disordered. C2H2-type zinc fingers lie at residues 113–135 (FGCPDCGKSFPWASHLERHRRVH), 141–163 (YSCPECGESYSQSSHLVQHRRTH), 169–191 (HKCQHCGKPFAGAAQLLAHSRGH), 197–219 (HRCGDCGKGFVWASHLERHRRVH), 225–247 (YECPECGEAFSQGSHLTKHRRSH), 279–303 (QRCAECGKAFRAAPPLRRHRRERSH), 303–325 (HRCGDCGKGFAWASHLQRHRRVH), 331–353 (FPCGLCGERFSQKAHLLQHGKTH), 359–383 (YKCGDCGKRFENAPPFLAHRRGHAA), 387–409 (FTCGDCGKGFAWASHLQRHRRVH), and 415–437 (YECPECGEAFSQGSHLTKHRRSH). Residues 428–479 (SHLTKHRRSHGPKAPLLPVQGRGEAGEPLRASPLSSGAEQRDGRRAQRGGVE) form a disordered region.

Belongs to the krueppel C2H2-type zinc-finger protein family.

Its subcellular location is the nucleus. In Gallus gallus (Chicken), this protein is Zinc finger protein CKR1.